We begin with the raw amino-acid sequence, 586 residues long: Major facilitator superfamily domain-containing protein 6-like (586 aa).

The next 2 helical transmembrane spans lie at isoleucine 50–alanine 70 and methionine 78–proline 98. A disordered region spans residues glycine 218–lysine 237. Residues serine 223–lysine 237 show a composition bias toward polar residues. 9 consecutive transmembrane segments (helical) span residues proline 240–leucine 260, leucine 284–glycine 304, valine 318–phenylalanine 338, leucine 365–phenylalanine 385, glutamate 397–phenylalanine 417, valine 428–isoleucine 448, valine 454–alanine 474, glycine 494–histidine 514, and valine 519–isoleucine 538.

The protein belongs to the major facilitator superfamily. MFSD6 family.

It localises to the membrane. The polypeptide is Major facilitator superfamily domain-containing protein 6-like (Mfsd6l) (Mus musculus (Mouse)).